A 215-amino-acid chain; its full sequence is Adenylate kinase (215 aa).

Residue 10–15 (GAGKGT) participates in ATP binding. The NMP stretch occupies residues 30–59 (STGDMFRLAIKEGTELGKKAKEFMDQGDLV). Residues T31, R36, 57–59 (DLV), 85–88 (GFPR), and Q92 contribute to the AMP site. An LID region spans residues 126–163 (GRRICPTCGTAYHVVYNPPKEEGICDKDGSQLIQRDDD). Residue R127 coordinates ATP. Zn(2+) is bound by residues C130, C133, C150, and D153. R160 and R171 together coordinate AMP. ATP is bound at residue R199.

The protein belongs to the adenylate kinase family. As to quaternary structure, monomer.

It is found in the cytoplasm. The catalysed reaction is AMP + ATP = 2 ADP. Its pathway is purine metabolism; AMP biosynthesis via salvage pathway; AMP from ADP: step 1/1. In terms of biological role, catalyzes the reversible transfer of the terminal phosphate group between ATP and AMP. Plays an important role in cellular energy homeostasis and in adenine nucleotide metabolism. This chain is Adenylate kinase, found in Oceanobacillus iheyensis (strain DSM 14371 / CIP 107618 / JCM 11309 / KCTC 3954 / HTE831).